We begin with the raw amino-acid sequence, 191 residues long: CASP-like protein 2U3 (191 aa).

The Cytoplasmic portion of the chain corresponds to 1–25; sequence MGAYDGAEAPRAAPASTAANSRPSR. The helical transmembrane segment at 26-46 threads the bilayer; the sequence is LLLLHSLLLRLVAVVVSILVI. Residues 47-68 lie on the Extracellular side of the membrane; sequence AVMVHAKQRVMIFKAEWDNSKA. Residues 69–89 traverse the membrane as a helical segment; that stretch reads FVALVAISAICLGYSFLQFIL. The Cytoplasmic segment spans residues 90–114; it reads SAFHLCSKSWKSPTKCWAWMNFIAD. Residues 115–135 traverse the membrane as a helical segment; that stretch reads QILTYAMLGAAAAAAELAYIA. The Extracellular portion of the chain corresponds to 136–157; that stretch reads KNGSSRAQWQPICSTFNTFCTR. A glycan (N-linked (GlcNAc...) asparagine) is linked at asparagine 137. Residues 158–178 traverse the membrane as a helical segment; it reads AGASIILSFIAVLALANSSAI. Over 179 to 191 the chain is Cytoplasmic; sequence SAYHLFRRPSSSV.

It belongs to the Casparian strip membrane proteins (CASP) family. As to quaternary structure, homodimer and heterodimers.

It is found in the cell membrane. The chain is CASP-like protein 2U3 from Selaginella moellendorffii (Spikemoss).